A 300-amino-acid polypeptide reads, in one-letter code: GTP cyclohydrolase FolE2 (300 aa).

This sequence belongs to the GTP cyclohydrolase IV family.

The catalysed reaction is GTP + H2O = 7,8-dihydroneopterin 3'-triphosphate + formate + H(+). Its pathway is cofactor biosynthesis; 7,8-dihydroneopterin triphosphate biosynthesis; 7,8-dihydroneopterin triphosphate from GTP: step 1/1. Converts GTP to 7,8-dihydroneopterin triphosphate. The chain is GTP cyclohydrolase FolE2 from Bacillus licheniformis (strain ATCC 14580 / DSM 13 / JCM 2505 / CCUG 7422 / NBRC 12200 / NCIMB 9375 / NCTC 10341 / NRRL NRS-1264 / Gibson 46).